Reading from the N-terminus, the 263-residue chain is Endonuclease 8 (263 aa).

Catalysis depends on Pro2, which acts as the Schiff-base intermediate with DNA. The active-site Proton donor is the Glu3. Lys53 serves as the catalytic Proton donor; for beta-elimination activity. DNA-binding residues include Gln70, Arg125, and Asn169. The FPG-type zinc-finger motif lies at 229–263 (KVFHRDGESCERCGGIIERTMLSSRPFYWCPHCQR). Residue Arg253 is the Proton donor; for delta-elimination activity of the active site.

This sequence belongs to the FPG family. Requires Zn(2+) as cofactor.

It catalyses the reaction 2'-deoxyribonucleotide-(2'-deoxyribose 5'-phosphate)-2'-deoxyribonucleotide-DNA = a 3'-end 2'-deoxyribonucleotide-(2,3-dehydro-2,3-deoxyribose 5'-phosphate)-DNA + a 5'-end 5'-phospho-2'-deoxyribonucleoside-DNA + H(+). Involved in base excision repair of DNA damaged by oxidation or by mutagenic agents. Acts as a DNA glycosylase that recognizes and removes damaged bases. Has a preference for oxidized pyrimidines, such as thymine glycol, 5,6-dihydrouracil and 5,6-dihydrothymine. Has AP (apurinic/apyrimidinic) lyase activity and introduces nicks in the DNA strand. Cleaves the DNA backbone by beta-delta elimination to generate a single-strand break at the site of the removed base with both 3'- and 5'-phosphates. In Pectobacterium carotovorum subsp. carotovorum (strain PC1), this protein is Endonuclease 8.